Here is a 150-residue protein sequence, read N- to C-terminus: VEARSRILKQTPNRTGKRLTRAQLITDSPGSTSSVTSINSRAPDLPSESGSPVYVNQVKVRVSDALLEKKKLMAARERKATKTLGIILGAFIVCWLPFFIISLAMPICKDACWFHLAIFDFFTWLGYLNSLINPIIYTMFNEDFKQAFHK.

The Extracellular segment spans residues 1 to 83; that stretch reads VEARSRILKQ…AARERKATKT (83 aa). Residues 27–40 are compositionally biased toward polar residues; sequence DSPGSTSSVTSINS. The segment at 27 to 50 is disordered; the sequence is DSPGSTSSVTSINSRAPDLPSESG. The helical transmembrane segment at 84-105 threads the bilayer; the sequence is LGIILGAFIVCWLPFFIISLAM. At 106–115 the chain is on the cytoplasmic side; sequence PICKDACWFH. Residues 116–138 form a helical membrane-spanning segment; that stretch reads LAIFDFFTWLGYLNSLINPIIYT. Positions 133–137 match the NPxxY motif; important for ligand-induced conformation changes and signaling motif; the sequence is NPIIY. Over 139–150 the chain is Extracellular; that stretch reads MFNEDFKQAFHK.

The protein belongs to the G-protein coupled receptor 1 family. In terms of assembly, homodimer. Heterodimer with HTR1D. Post-translationally, phosphorylated. Desensitization of the receptor may be mediated by its phosphorylation. Palmitoylated.

It is found in the cell membrane. G-protein coupled receptor for 5-hydroxytryptamine (serotonin). Also functions as a receptor for ergot alkaloid derivatives, various anxiolytic and antidepressant drugs and other psychoactive substances, such as lysergic acid diethylamide (LSD). Ligand binding causes a conformation change that triggers signaling via guanine nucleotide-binding proteins (G proteins) and modulates the activity of downstream effectors, such as adenylate cyclase. HTR1B is coupled to G(i)/G(o) G alpha proteins and mediates inhibitory neurotransmission by inhibiting adenylate cyclase activity. Arrestin family members inhibit signaling via G proteins and mediate activation of alternative signaling pathways. Regulates the release of 5-hydroxytryptamine, dopamine and acetylcholine in the brain, and thereby affects neural activity, nociceptive processing, pain perception, mood and behavior. Besides, plays a role in vasoconstriction of cerebral arteries. The chain is 5-hydroxytryptamine receptor 1B (HTR1B) from Sus scrofa (Pig).